An 87-amino-acid polypeptide reads, in one-letter code: Small ribosomal subunit protein uS17 (87 aa).

The protein belongs to the universal ribosomal protein uS17 family. As to quaternary structure, part of the 30S ribosomal subunit.

In terms of biological role, one of the primary rRNA binding proteins, it binds specifically to the 5'-end of 16S ribosomal RNA. This chain is Small ribosomal subunit protein uS17, found in Macrococcus caseolyticus (strain JCSC5402) (Macrococcoides caseolyticum).